The following is a 359-amino-acid chain: Peptide chain release factor 1 (359 aa).

Gln232 bears the N5-methylglutamine mark.

This sequence belongs to the prokaryotic/mitochondrial release factor family. Post-translationally, methylated by PrmC. Methylation increases the termination efficiency of RF1.

The protein resides in the cytoplasm. Its function is as follows. Peptide chain release factor 1 directs the termination of translation in response to the peptide chain termination codons UAG and UAA. In Lawsonia intracellularis (strain PHE/MN1-00), this protein is Peptide chain release factor 1.